The primary structure comprises 107 residues: Heme-degrading monooxygenase (107 aa).

Residues 2-94 form the ABM domain; sequence IIVTNTAKIT…YILDNKITYY (93 aa). Asparagine 6 provides a ligand contact to Fe cation. Position 76 (histidine 76) interacts with heme.

It belongs to the antibiotic biosynthesis monooxygenase family. Heme-degrading monooxygenase IsdG subfamily. As to quaternary structure, homodimer.

The protein localises to the cytoplasm. The catalysed reaction is heme b + 3 reduced [NADPH--hemoprotein reductase] + 3 O2 = biliverdin IXalpha + CO + Fe(2+) + 3 oxidized [NADPH--hemoprotein reductase] + 3 H2O + H(+). Functionally, allows bacterial pathogens to use the host heme as an iron source. Catalyzes the oxidative degradation of the heme macrocyclic porphyrin ring to the biliverdin in the presence of a suitable electron donor such as ascorbate or NADPH--cytochrome P450 reductase, with subsequent release of free iron. This chain is Heme-degrading monooxygenase, found in Bacillus thuringiensis subsp. konkukian (strain 97-27).